The chain runs to 156 residues: Small ribosomal subunit protein uS7 (156 aa).

The protein belongs to the universal ribosomal protein uS7 family. In terms of assembly, part of the 30S ribosomal subunit. Contacts proteins S9 and S11.

Functionally, one of the primary rRNA binding proteins, it binds directly to 16S rRNA where it nucleates assembly of the head domain of the 30S subunit. Is located at the subunit interface close to the decoding center, probably blocks exit of the E-site tRNA. This chain is Small ribosomal subunit protein uS7, found in Mycolicibacterium gilvum (strain PYR-GCK) (Mycobacterium gilvum (strain PYR-GCK)).